Consider the following 208-residue polypeptide: ATP phosphoribosyltransferase (208 aa).

Belongs to the ATP phosphoribosyltransferase family. Short subfamily. In terms of assembly, heteromultimer composed of HisG and HisZ subunits.

The protein resides in the cytoplasm. It catalyses the reaction 1-(5-phospho-beta-D-ribosyl)-ATP + diphosphate = 5-phospho-alpha-D-ribose 1-diphosphate + ATP. The protein operates within amino-acid biosynthesis; L-histidine biosynthesis; L-histidine from 5-phospho-alpha-D-ribose 1-diphosphate: step 1/9. Its function is as follows. Catalyzes the condensation of ATP and 5-phosphoribose 1-diphosphate to form N'-(5'-phosphoribosyl)-ATP (PR-ATP). Has a crucial role in the pathway because the rate of histidine biosynthesis seems to be controlled primarily by regulation of HisG enzymatic activity. The sequence is that of ATP phosphoribosyltransferase from Thermotoga petrophila (strain ATCC BAA-488 / DSM 13995 / JCM 10881 / RKU-1).